A 145-amino-acid chain; its full sequence is Maximins 3/H9 type 1 (145 aa).

An N-terminal signal peptide occupies residues 1–18; it reads MNFKYIVAVSFLIASAYA. Propeptides lie at residues 19-43 and 74-124; these read RSVQ…LREI and RTAE…KEKR. Residue Ile144 is modified to Isoleucine amide.

This sequence belongs to the bombinin family. As to expression, expressed by the skin glands.

It is found in the secreted. Functionally, maximin-3 shows antibacterial activity against both Gram-positive and Gram-negative bacteria. It also shows antimicrobial activity against the fungus C.albicans, but not against A.flavus nor P.uticale. It has little hemolytic activity. It possess a significant cytotoxicity against tumor cell lines. It possess a significant anti-HIV activity. It shows high spermicidal activity. Maximin-H9 shows antimicrobial activity against bacteria and against the fungus C.albicans. Shows strong hemolytic activity. The polypeptide is Maximins 3/H9 type 1 (Bombina maxima (Giant fire-bellied toad)).